The chain runs to 1132 residues: MTPSQWDLPVELCCRPMAFVTLTGLDVVYNAVHRAVWDAFCANRRADRVPISFKVLPGDHEYPKCRTKRTSYEWYIPKGILKTGWMNKHLNLVPALVVVFYELDWDEPQWKEKQSECATRVEIVRQSLQGRNTKVAVVLIQKKTPLPPGEDVIASERAAALCNACDLSGKSLFVLPHTDHLVGYIIRLENAFYEHAQTYYYTEIRRVKSHKEFLNKTTHQLLFVRHQFKIAFFSELKQDTQNALKNYRTAYNLVHELRAHETNMLEIKTMAGFINYKICRLCFQHNTPLDAIAQFRKHIDLCKKKIGSAELAFEHAAWMSKQFQAFGDLFDEAIKLGLTAIQTQNPGFYYQQAAYYAQERKQLASMLCNHDSSVVYPNPDPLETQTGVLDFYGQRPWRQGTLSFDLSDPEKEKMGILSLQLKERNVLHSELIITLLSNAVAQFKKYKCPRMKSHLMVQMGEEYYFAKDYAKALKLLDYVMCEYRSEGWWTLLTSILTTALKCSYLMAQIKDYITYSLELLGRASTLKDDQKSRIEKNLIKVLMNESPDPEPDCDAAAVKASQKLWSDRVSLAGSNVFTIEVQDFIPFVQCKAKFLAPSFHVDVPVQFDIYLRADCPHPIRFSKLCISFNNQDYNQYCVVEEAYQKSDILEQSSQGTMCLVPGKTRKFTFKFVAKTEDVGKKIEITSVDLILGSESGRCVILNWRGGGGDAASSQEALQAARSFRRRPKLPDNEVHWDSLAIQASTMIISRVPNISVQLRHEPPALTNEMYCLVVTIESHEETVAKDVKLTAGLKPGQDANLTQKTQVTLRGTDTCDDSFPALLPDIPVGDLQPGEKLEKPIYIRCGTVGARMFLVYVSYLINTTVEGKEILCKCHRDETVTIETVFPFDVAIKFVSTKLEHLDRVFADIPFLLMTDILSASPWPLTIVTSQLQLSASMTSVDQLESYVENVVLQTGESASECFCLRCPPVTNSGGVATGCYIISWKRSSPVESVPVVSTVITLPHVIVESIPLHVKADLPSFGRVRESLPVRYHLQNKTNLVQDVEVSMEPSDAFMFSGLKQIRLRILPGTQQEVLYNFYPLMAGYQQLPSLHINLLRFPNFTNQLLRRFIPTHIFVKPQGRQADENSIAAA.

This sequence belongs to the TRAPPC11 family. In terms of assembly, component of the multisubunit TRAPP (transport protein particle) complex.

It localises to the golgi apparatus. It is found in the cis-Golgi network. Functionally, involved in endoplasmic reticulum to Golgi apparatus trafficking at a very early stage. This is Trafficking protein particle complex subunit 11 (TRAPPC11) from Gallus gallus (Chicken).